The sequence spans 46 residues: Bottromycin D (46 aa).

Residues 10 to 46 (MTADFLNDDPNNAELSSLEMEELESWGAWSDDTDQSV) constitute a propeptide that is removed on maturation.

Post-translationally, the precursor peptide is first ribosomally synthesized and then highly tailored by specific enzymes to yield the final natural product. These modifications include several methylations, cyclization and the formation of t-Leu and Thia-beta-Ala residues.

The protein resides in the secreted. Functionally, bottromycin D is a ribosomally synthesized and post-translationally modified peptide (RiPP) that displays antibiotic activity against methicillin-resistant S.aureus (MRSA). The chain is Bottromycin D from Streptomyces sp.